Here is a 310-residue protein sequence, read N- to C-terminus: tRNA uridine(34) hydroxylase (310 aa).

Residues 124-218 enclose the Rhodanese domain; sequence SDPEVLLIDT…YFEEVAQEES (95 aa). The active-site Cysteine persulfide intermediate is Cys-178.

It belongs to the TrhO family.

The enzyme catalyses uridine(34) in tRNA + AH2 + O2 = 5-hydroxyuridine(34) in tRNA + A + H2O. Its function is as follows. Catalyzes oxygen-dependent 5-hydroxyuridine (ho5U) modification at position 34 in tRNAs. The chain is tRNA uridine(34) hydroxylase from Pseudomonas entomophila (strain L48).